The primary structure comprises 53 residues: Large ribosomal subunit protein eL40 (53 aa).

The protein belongs to the eukaryotic ribosomal protein eL40 family.

The protein is Large ribosomal subunit protein eL40 of Pyrobaculum calidifontis (strain DSM 21063 / JCM 11548 / VA1).